Reading from the N-terminus, the 437-residue chain is 3-phosphoshikimate 1-carboxyvinyltransferase (437 aa).

3-phosphoshikimate contacts are provided by K22, S23, and R27. Residue K22 coordinates phosphoenolpyruvate. Phosphoenolpyruvate is bound by residues G96 and R125. Residues S170, Q172, D323, and K350 each coordinate 3-phosphoshikimate. Residue Q172 participates in phosphoenolpyruvate binding. D323 serves as the catalytic Proton acceptor. Residues R354 and R396 each coordinate phosphoenolpyruvate.

The protein belongs to the EPSP synthase family. In terms of assembly, monomer.

Its subcellular location is the cytoplasm. It carries out the reaction 3-phosphoshikimate + phosphoenolpyruvate = 5-O-(1-carboxyvinyl)-3-phosphoshikimate + phosphate. It functions in the pathway metabolic intermediate biosynthesis; chorismate biosynthesis; chorismate from D-erythrose 4-phosphate and phosphoenolpyruvate: step 6/7. Functionally, catalyzes the transfer of the enolpyruvyl moiety of phosphoenolpyruvate (PEP) to the 5-hydroxyl of shikimate-3-phosphate (S3P) to produce enolpyruvyl shikimate-3-phosphate and inorganic phosphate. In Synechococcus sp. (strain RCC307), this protein is 3-phosphoshikimate 1-carboxyvinyltransferase.